A 732-amino-acid chain; its full sequence is Trehalose phosphorylase (732 aa).

A propeptide spanning residues 1–25 (MAPPHQFQSKPSDVIRRRLSSAVSS) is cleaved from the precursor.

It belongs to the glycosyltransferase group 1 family. Glycosyltransferase 4 subfamily. Homodimer.

It carries out the reaction alpha,alpha-trehalose + phosphate = alpha-D-glucose + alpha-D-glucose 1-phosphate. With respect to regulation, activity abolished by 1 mM Cu(2+). 0.1 mM Cu(2+) reduces trehalose phosphorolysis to 76% and trehalose synthesis to 48% of maximum activity. 1 mM Zn(2+) abolishes trehalose synthesis, and reduces trehalose phosphorolysis to 40% of maximum activity. Unaffected by EDTA. Functionally, reversibly catalyzes the synthesis and degradation of trehalose from glucose and alpha-D-glucose 1-phosphate. The equilibrium lies in the direction of trehalose synthesis. This chain is Trehalose phosphorylase, found in Grifola frondosa (Maitake).